A 237-amino-acid polypeptide reads, in one-letter code: Large ribosomal subunit protein uL1 (237 aa).

Belongs to the universal ribosomal protein uL1 family. In terms of assembly, part of the 50S ribosomal subunit.

Functionally, binds directly to 23S rRNA. The L1 stalk is quite mobile in the ribosome, and is involved in E site tRNA release. In terms of biological role, protein L1 is also a translational repressor protein, it controls the translation of the L11 operon by binding to its mRNA. The polypeptide is Large ribosomal subunit protein uL1 (Synechococcus elongatus (strain ATCC 33912 / PCC 7942 / FACHB-805) (Anacystis nidulans R2)).